The chain runs to 254 residues: Transmembrane protein 70, mitochondrial (254 aa).

Residues M1–C78 constitute a mitochondrion transit peptide. The Mitochondrial matrix portion of the chain corresponds to S79 to S112. Residues L113–L133 traverse the membrane as a helical segment. Topologically, residues P134–Q136 are mitochondrial intermembrane. The chain crosses the membrane as a helical span at residues I137–L157. Residues T158–K254 lie on the Mitochondrial matrix side of the membrane.

This sequence belongs to the TMEM70 family. Homooligomer. Interacts (homooligomer form) with ATP5MC1; this interaction facilitates the oligomer formation of subunit c/ATP5MC1 (c-ring) and the c-ring membrane insertion and also protects ATP5MC1 against intramitochondrial proteolysis. Interacts with the core subunits TMEM126B, NDUFAF1, ECSIT and ACAD9 of the MCIA complex. Interacts with ATP5MC3, TMEM242 and TIMMDC1.

It is found in the mitochondrion inner membrane. In terms of biological role, scaffold protein that participates in the c-ring assembly of mitochondrial ATP synthase (F(1)F(0) ATP synthase or complex V) by facilitating the membrane insertion and oligomer formation of the subunit c/ATP5MC1 through its interaction. Therefore, participates in the early stage of mitochondrial ATP synthase biogenesis and also protects subunit c/ATP5MC1 against intramitochondrial proteolysis. In addition, binds the mitochondrial proton-transporting ATP synthase complexes I and may play a role in the stability of its membrane-bound subassemblies. This is Transmembrane protein 70, mitochondrial from Bos taurus (Bovine).